A 312-amino-acid chain; its full sequence is tRNA uridine(34) hydroxylase (312 aa).

One can recognise a Rhodanese domain in the interval 124 to 218 (SDPEVLLIDT…YLEEVPEQES (95 aa)). The Cysteine persulfide intermediate role is filled by cysteine 178. Residues 293–312 (AKARNQPHPIGRNYRLPSEA) are disordered.

The protein belongs to the TrhO family.

It catalyses the reaction uridine(34) in tRNA + AH2 + O2 = 5-hydroxyuridine(34) in tRNA + A + H2O. Catalyzes oxygen-dependent 5-hydroxyuridine (ho5U) modification at position 34 in tRNAs. The protein is tRNA uridine(34) hydroxylase of Pseudomonas syringae pv. syringae (strain B728a).